The chain runs to 1039 residues: Isoleucine--tRNA ligase (1039 aa).

A 'HIGH' region motif is present at residues 46–56 (PYCSGAIHLGT). Residues 600–604 (KMSKS) carry the 'KMSKS' region motif. Position 603 (lysine 603) interacts with ATP.

This sequence belongs to the class-I aminoacyl-tRNA synthetase family. IleS type 2 subfamily. As to quaternary structure, monomer. Zn(2+) serves as cofactor.

The protein localises to the cytoplasm. The catalysed reaction is tRNA(Ile) + L-isoleucine + ATP = L-isoleucyl-tRNA(Ile) + AMP + diphosphate. Its function is as follows. Catalyzes the attachment of isoleucine to tRNA(Ile). As IleRS can inadvertently accommodate and process structurally similar amino acids such as valine, to avoid such errors it has two additional distinct tRNA(Ile)-dependent editing activities. One activity is designated as 'pretransfer' editing and involves the hydrolysis of activated Val-AMP. The other activity is designated 'posttransfer' editing and involves deacylation of mischarged Val-tRNA(Ile). The protein is Isoleucine--tRNA ligase of Methanocaldococcus jannaschii (strain ATCC 43067 / DSM 2661 / JAL-1 / JCM 10045 / NBRC 100440) (Methanococcus jannaschii).